The primary structure comprises 58 residues: Small integral membrane protein 11 (58 aa).

A helical transmembrane segment spans residues 9 to 29; that stretch reads FPLLLYILAAKTLILCLAFAG. Positions 29 to 58 form a coiled coil; that stretch reads GVKVYQRKRLEAKQQKVEAEKRKQAEKKES.

Its subcellular location is the membrane. This chain is Small integral membrane protein 11 (SMIM11), found in Bos taurus (Bovine).